A 130-amino-acid chain; its full sequence is Small ribosomal subunit protein uS8 (130 aa).

This sequence belongs to the universal ribosomal protein uS8 family. As to quaternary structure, part of the 30S ribosomal subunit. Contacts proteins S5 and S12.

Its function is as follows. One of the primary rRNA binding proteins, it binds directly to 16S rRNA central domain where it helps coordinate assembly of the platform of the 30S subunit. This Marinomonas sp. (strain MWYL1) protein is Small ribosomal subunit protein uS8.